Reading from the N-terminus, the 77-residue chain is uncharacterized protein (77 aa).

Positions 1–77 constitute a Peptidase A1 domain; it reads MAFERQGKIE…VAILDGKLVW (77 aa).

This is an uncharacterized protein from Saccharomyces cerevisiae (strain ATCC 204508 / S288c) (Baker's yeast).